Here is a 266-residue protein sequence, read N- to C-terminus: Undecaprenyl-diphosphatase (266 aa).

8 helical membrane-spanning segments follow: residues 1–21, 39–59, 87–107, 114–134, 144–164, 184–204, 218–238, and 246–266; these read MDIF…FLPI, QGLT…VIYF, WWII…KDFI, IEVI…ADKL, VGWK…IPGT, AARF…ILVV, ALVL…HYFL, and MTPF…VIFA.

The protein belongs to the UppP family.

It is found in the cell inner membrane. The enzyme catalyses di-trans,octa-cis-undecaprenyl diphosphate + H2O = di-trans,octa-cis-undecaprenyl phosphate + phosphate + H(+). Its function is as follows. Catalyzes the dephosphorylation of undecaprenyl diphosphate (UPP). Confers resistance to bacitracin. This Shewanella loihica (strain ATCC BAA-1088 / PV-4) protein is Undecaprenyl-diphosphatase.